The sequence spans 356 residues: tRNA-specific 2-thiouridylase MnmA (356 aa).

Residues 6–13 and L32 contribute to the ATP site; that span reads GMSGGVDS. C102 functions as the Nucleophile in the catalytic mechanism. C102 and C200 are oxidised to a cystine. G127 is a binding site for ATP. Residues 150–152 are interaction with tRNA; the sequence is RDQ. C200 acts as the Cysteine persulfide intermediate in catalysis. The interval 302–303 is interaction with tRNA; that stretch reads RY.

This sequence belongs to the MnmA/TRMU family.

The protein localises to the cytoplasm. The enzyme catalyses S-sulfanyl-L-cysteinyl-[protein] + uridine(34) in tRNA + AH2 + ATP = 2-thiouridine(34) in tRNA + L-cysteinyl-[protein] + A + AMP + diphosphate + H(+). Its function is as follows. Catalyzes the 2-thiolation of uridine at the wobble position (U34) of tRNA, leading to the formation of s(2)U34. This Aquifex aeolicus (strain VF5) protein is tRNA-specific 2-thiouridylase MnmA.